The primary structure comprises 493 residues: Maintenance of mitochondrial morphology protein 1 (493 aa).

Over 1–23 (MSQHSQYGVPGVPAQSSLSFTQG) the chain is Lumenal. A helical membrane pass occupies residues 24-44 (FLLGQLSVVLLIGAFIKFFIF). Over 45 to 493 (GEAPAPPSRG…GSMPRVVRTP (449 aa)) the chain is Cytoplasmic. Positions 52 to 104 (SRGLASRTASHHRSYSINQGDNNANNNTNNGSSPRTLREKPSTSNVLRPVPSS) are disordered. Residues 69 to 81 (NQGDNNANNNTNN) are compositionally biased toward low complexity. Polar residues predominate over residues 93–104 (STSNVLRPVPSS). The SMP-LTD domain maps to 140–391 (QPESLDWFNV…EPRVQVVGLP (252 aa)). The disordered stretch occupies residues 420–493 (SSRSGGGPVE…GSMPRVVRTP (74 aa)).

Belongs to the MMM1 family. Homodimer. Component of the ER-mitochondria encounter structure (ERMES) or MDM complex, composed of mmm1, mdm10, mdm12 and mdm34. A mmm1 homodimer associates with one molecule of mdm12 on each side in a pairwise head-to-tail manner, and the SMP-LTD domains of mmm1 and mdm12 generate a continuous hydrophobic tunnel for phospholipid trafficking.

The protein resides in the endoplasmic reticulum membrane. In terms of biological role, component of the ERMES/MDM complex, which serves as a molecular tether to connect the endoplasmic reticulum (ER) and mitochondria. Components of this complex are involved in the control of mitochondrial shape and protein biogenesis, and function in nonvesicular lipid trafficking between the ER and mitochondria. The mdm12-mmm1 subcomplex functions in the major beta-barrel assembly pathway that is responsible for biogenesis of all outer membrane beta-barrel proteins, and acts in a late step after the SAM complex. The mdm10-mdm12-mmm1 subcomplex further acts in the TOM40-specific pathway after the action of the mdm12-mmm1 complex. Essential for establishing and maintaining the structure of mitochondria and maintenance of mtDNA nucleoids. This Talaromyces stipitatus (strain ATCC 10500 / CBS 375.48 / QM 6759 / NRRL 1006) (Penicillium stipitatum) protein is Maintenance of mitochondrial morphology protein 1.